The primary structure comprises 439 residues: 23S rRNA (uracil(1939)-C(5))-methyltransferase RlmD (439 aa).

One can recognise a TRAM domain in the interval 10-69; that stretch reads KTQLNTRHQAVQVERLDHHGAGIAYLKKKPLFIDGALPGEEVVTQLVEEKSKFARGKLIK. Residues cysteine 82, cysteine 88, cysteine 91, and cysteine 169 each coordinate [4Fe-4S] cluster. Residues glutamine 272, phenylalanine 301, asparagine 306, glutamate 322, asparagine 349, and aspartate 370 each contribute to the S-adenosyl-L-methionine site. The active-site Nucleophile is cysteine 396.

It belongs to the class I-like SAM-binding methyltransferase superfamily. RNA M5U methyltransferase family. RlmD subfamily.

The enzyme catalyses uridine(1939) in 23S rRNA + S-adenosyl-L-methionine = 5-methyluridine(1939) in 23S rRNA + S-adenosyl-L-homocysteine + H(+). Functionally, catalyzes the formation of 5-methyl-uridine at position 1939 (m5U1939) in 23S rRNA. The chain is 23S rRNA (uracil(1939)-C(5))-methyltransferase RlmD from Vibrio campbellii (strain ATCC BAA-1116).